We begin with the raw amino-acid sequence, 504 residues long: Lysine--tRNA ligase (504 aa).

2 residues coordinate Mg(2+): Glu411 and Glu418.

This sequence belongs to the class-II aminoacyl-tRNA synthetase family. As to quaternary structure, homodimer. It depends on Mg(2+) as a cofactor.

It localises to the cytoplasm. The enzyme catalyses tRNA(Lys) + L-lysine + ATP = L-lysyl-tRNA(Lys) + AMP + diphosphate. This Clostridium botulinum (strain Loch Maree / Type A3) protein is Lysine--tRNA ligase.